Reading from the N-terminus, the 204-residue chain is Inactive ribonuclease-like protein 9 (204 aa).

Residues 1–26 form the signal peptide; the sequence is MMRTLITIHPLPLLLLLQQLLQPVQF. Disulfide bonds link cysteine 97–cysteine 152, cysteine 115–cysteine 167, and cysteine 122–cysteine 129. N-linked (GlcNAc...) asparagine glycosylation is found at asparagine 130 and asparagine 142.

It belongs to the pancreatic ribonuclease family.

It is found in the secreted. Its function is as follows. Does not exhibit any ribonuclease activity. This is Inactive ribonuclease-like protein 9 (RNASE9) from Symphalangus syndactylus (Siamang).